We begin with the raw amino-acid sequence, 405 residues long: Multifunctional CCA protein (405 aa).

Gly8 and Arg11 together coordinate ATP. Residues Gly8 and Arg11 each contribute to the CTP site. Mg(2+)-binding residues include Asp21 and Asp23. ATP is bound by residues Arg91, Arg137, and Arg140. CTP-binding residues include Arg91, Arg137, and Arg140. The region spanning 228 to 329 (TGIHSMMVLE…NDFLDKCDVW (102 aa)) is the HD domain.

It belongs to the tRNA nucleotidyltransferase/poly(A) polymerase family. Bacterial CCA-adding enzyme type 1 subfamily. As to quaternary structure, monomer. Can also form homodimers and oligomers. The cofactor is Mg(2+). Requires Ni(2+) as cofactor.

The catalysed reaction is a tRNA precursor + 2 CTP + ATP = a tRNA with a 3' CCA end + 3 diphosphate. It catalyses the reaction a tRNA with a 3' CCA end + 2 CTP + ATP = a tRNA with a 3' CCACCA end + 3 diphosphate. Functionally, catalyzes the addition and repair of the essential 3'-terminal CCA sequence in tRNAs without using a nucleic acid template. Adds these three nucleotides in the order of C, C, and A to the tRNA nucleotide-73, using CTP and ATP as substrates and producing inorganic pyrophosphate. tRNA 3'-terminal CCA addition is required both for tRNA processing and repair. Also involved in tRNA surveillance by mediating tandem CCA addition to generate a CCACCA at the 3' terminus of unstable tRNAs. While stable tRNAs receive only 3'-terminal CCA, unstable tRNAs are marked with CCACCA and rapidly degraded. This is Multifunctional CCA protein from Pseudoalteromonas atlantica (strain T6c / ATCC BAA-1087).